The following is a 398-amino-acid chain: Probable elongation factor 1-gamma (398 aa).

Positions 66 to 199 (GTSANAETVQ…SVAQFNQAKF (134 aa)) constitute a GST C-terminal domain. The interval 210–248 (APKAEKPKKEAKPAAAAAQPEDDEPKEEKSKDPFQDMPK) is disordered. Residues 211-221 (PKAEKPKKEAK) show a composition bias toward basic and acidic residues. An EF-1-gamma C-terminal domain is found at 239–398 (SKDPFQDMPK…KKFNQGKIFK (160 aa)).

EF-1 is composed of four subunits: alpha, beta, delta, and gamma. In terms of processing, AMPylated by fic-1.

In terms of biological role, probably plays a role in anchoring the complex to other cellular components. This Caenorhabditis elegans protein is Probable elongation factor 1-gamma.